Consider the following 428-residue polypeptide: Sarcosine reductase complex component B subunit alpha (428 aa).

Residue Cys-242 is modified to Pyruvic acid (Cys).

Heterotetramer of two alpha and two beta subunits. Component of the sarcosine reductase complex, together with components A and C. PB is substrate specific. The peptide chain is cleaved into beta and alpha chains, and the alpha chain N-terminal cysteine is deaminated and oxidized to form a reactive pyruvoyl group.

It catalyses the reaction acetyl phosphate + methylamine + [thioredoxin]-disulfide + H2O = sarcosine + [thioredoxin]-dithiol + phosphate + H(+). In terms of biological role, in the first step of sarcosine reductase, the substrate is bound to component PB via a Schiff base intermediate. Then the PB-activated substrate is nucleophilically attacked by the selenol anion of component PA to transform it to a carboxymethylated selenoether and the respective amine. By action of component PC, acetyl phosphate is formed, leaving component PA in its oxidized state. Finally component PA becomes reduced by the thioredoxin system to start a new catalytic cycle of reductive deamination. The sequence is that of Sarcosine reductase complex component B subunit alpha (grdG) from Peptoclostridium acidaminophilum (Eubacterium acidaminophilum).